The following is a 727-amino-acid chain: Centrosomal protein kizuna (727 aa).

The disordered stretch occupies residues 1–20; that stretch reads MTERSGRGGGTRGASALPSP. Positions 77-124 form a coiled coil; the sequence is KNARIRNQEYLKQFERIQANITASLEKLQELKIEFETQIKKMQLLSKD. 3 disordered regions span residues 176–226, 271–456, and 564–727; these read DFTT…NKSD, EGKK…FTNL, and RLAV…PRTP. The span at 198–223 shows a compositional bias: polar residues; the sequence is HQQTAQSSDVTGSRVVQTPGDTQCLN. Positions 286–324 are enriched in basic and acidic residues; that stretch reads LSPENRTTDLKCDSSRRSEGSEGEILTREHIEVEEERAR. Serine 328 bears the Phosphoserine mark. Residues 343–359 show a composition bias toward basic and acidic residues; that stretch reads PQEKPPARKASSDHLPC. Low complexity predominate over residues 380 to 390; it reads LSSSSDLTVSV. Phosphothreonine; by PLK1 is present on threonine 387. The segment covering 442–455 has biased composition (polar residues); the sequence is APSTPDSPNESFTN. The segment covering 569–583 has biased composition (low complexity); the sequence is SSKSSCSLPSTPSDE. The span at 603-613 shows a compositional bias: acidic residues; it reads QEDESREESTE. The segment covering 631-642 has biased composition (polar residues); it reads LKQSALQGSTHQ. 2 stretches are compositionally biased toward low complexity: residues 659-669 and 677-689; these read GLKTGSGTFKT and SEAS…GSPL. Residues serine 711, serine 714, and serine 716 each carry the phosphoserine modification.

Belongs to the kizuna family. Interacts with AKAP9, CEP72, ODF2, PCNT and TUBGCP2. Phosphorylation at Thr-387 by PLK1 is not needed for centrosomal localization or pericentriolar material expansion but is indispensable for spindle-pole stabilization.

The protein localises to the cytoplasm. It is found in the cytoskeleton. It localises to the microtubule organizing center. The protein resides in the centrosome. Its subcellular location is the cilium basal body. Centrosomal protein required for establishing a robust mitotic centrosome architecture that can endure the forces that converge on the centrosomes during spindle formation. Required for stabilizing the expanded pericentriolar material around the centriole. This Bos taurus (Bovine) protein is Centrosomal protein kizuna (KIZ).